A 171-amino-acid chain; its full sequence is tRNA-splicing endonuclease subunit Sen15 (171 aa).

The tract at residues 1 to 35 (MEERGDSEPTPGCSGLGPGGVRGFGDGGGAPSWAP) is disordered. At serine 7 the chain carries Phosphoserine. Residues 14–30 (SGLGPGGVRGFGDGGGA) are compositionally biased toward gly residues. Position 168 is a phosphoserine (serine 168).

It belongs to the SEN15 family. Homodimer. tRNA splicing endonuclease is a heterotetramer composed of TSEN2, TSEN15, TSEN34/LENG5 and TSEN54. tRNA splicing endonuclease complex also contains proteins of the Pre-mRNA 3' end processing machinery, such as CLP1, CPSF1, CPSF4 and CSTF2. As to expression, widely expressed. Highly expressed in testis and uterus.

The protein resides in the nucleus. It is found in the nucleolus. Functionally, non-catalytic subunit of the tRNA-splicing endonuclease complex, a complex responsible for identification and cleavage of the splice sites in pre-tRNA. It cleaves pre-tRNA at the 5' and 3' splice sites to release the intron. The products are an intron and two tRNA half-molecules bearing 2',3' cyclic phosphate and 5'-OH termini. There are no conserved sequences at the splice sites, but the intron is invariably located at the same site in the gene, placing the splice sites an invariant distance from the constant structural features of the tRNA body. The tRNA splicing endonuclease is also involved in mRNA processing via its association with pre-mRNA 3'-end processing factors, establishing a link between pre-tRNA splicing and pre-mRNA 3'-end formation, suggesting that the endonuclease subunits function in multiple RNA-processing events. This chain is tRNA-splicing endonuclease subunit Sen15 (TSEN15), found in Homo sapiens (Human).